A 501-amino-acid chain; its full sequence is Melianol synthase CYP71BQ5 (501 aa).

Residues 1–21 form a helical membrane-spanning segment; the sequence is MEFRLPVLLSFLLFFLMLVRH. Cysteine 439 contacts heme.

It belongs to the cytochrome P450 family. It depends on heme as a cofactor. Mainly expressed in petioles and roots, and, to a lower extent, in leaves.

The protein localises to the membrane. The catalysed reaction is dihydroniloticin + 2 reduced [NADPH--hemoprotein reductase] + 2 O2 = melianol + 2 oxidized [NADPH--hemoprotein reductase] + 3 H2O + 2 H(+). It participates in secondary metabolite biosynthesis; terpenoid biosynthesis. Monooxygenase involved in the biosynthesis of limonoids triterpene natural products such as azadirachtin, an antifeedant widely used as bioinsecticide, and possessing many medicinal applications including anti-tumoral, anti-malarial, anti-rheumatic, antibacterial, anti-inflammatory, anti-pyretic and diuretic effects. Catalyzes the conversion of dihydroniloticin to the protolimonoid melianol. The chain is Melianol synthase CYP71BQ5 from Melia azedarach (Chinaberry tree).